Consider the following 404-residue polypeptide: Probable tRNA sulfurtransferase (404 aa).

Residues 60–165 (QPIVEALKLV…DEAAYISYEE (106 aa)) form the THUMP domain. ATP is bound by residues 183-184 (ML), 208-209 (HF), R265, G287, and Q296.

This sequence belongs to the ThiI family.

The protein resides in the cytoplasm. It catalyses the reaction [ThiI sulfur-carrier protein]-S-sulfanyl-L-cysteine + a uridine in tRNA + 2 reduced [2Fe-2S]-[ferredoxin] + ATP + H(+) = [ThiI sulfur-carrier protein]-L-cysteine + a 4-thiouridine in tRNA + 2 oxidized [2Fe-2S]-[ferredoxin] + AMP + diphosphate. It carries out the reaction [ThiS sulfur-carrier protein]-C-terminal Gly-Gly-AMP + S-sulfanyl-L-cysteinyl-[cysteine desulfurase] + AH2 = [ThiS sulfur-carrier protein]-C-terminal-Gly-aminoethanethioate + L-cysteinyl-[cysteine desulfurase] + A + AMP + 2 H(+). It functions in the pathway cofactor biosynthesis; thiamine diphosphate biosynthesis. In terms of biological role, catalyzes the ATP-dependent transfer of a sulfur to tRNA to produce 4-thiouridine in position 8 of tRNAs, which functions as a near-UV photosensor. Also catalyzes the transfer of sulfur to the sulfur carrier protein ThiS, forming ThiS-thiocarboxylate. This is a step in the synthesis of thiazole, in the thiamine biosynthesis pathway. The sulfur is donated as persulfide by IscS. This Streptococcus pyogenes serotype M2 (strain MGAS10270) protein is Probable tRNA sulfurtransferase.